A 189-amino-acid polypeptide reads, in one-letter code: Small ribosomal subunit protein uS5 (189 aa).

Positions 22-85 constitute an S5 DRBM domain; the sequence is FVDKLVAINR…EAAKRELIFV (64 aa).

It belongs to the universal ribosomal protein uS5 family. Part of the 30S ribosomal subunit. Contacts proteins S4 and S8.

With S4 and S12 plays an important role in translational accuracy. In terms of biological role, located at the back of the 30S subunit body where it stabilizes the conformation of the head with respect to the body. The protein is Small ribosomal subunit protein uS5 of Rhizobium johnstonii (strain DSM 114642 / LMG 32736 / 3841) (Rhizobium leguminosarum bv. viciae).